We begin with the raw amino-acid sequence, 291 residues long: Lys-63-specific deubiquitinase BRCC36 (291 aa).

An N-acetylalanine modification is found at alanine 2. An MPN domain is found at 12–179 (VHLESDAFLV…YTCFQSVQAQ (168 aa)). Zn(2+) contacts are provided by histidine 122, histidine 124, and aspartate 135. Positions 122-135 (HSHPHITVWPSHVD) match the JAMM motif motif. Serine 233 bears the Phosphoserine mark.

The protein belongs to the peptidase M67A family. BRCC36 subfamily. As to quaternary structure, component of the ARISC complex, at least composed of UIMC1/RAP80, ABRAXAS1, BRCC3/BRCC36, BABAM2 and BABAM1/NBA1. Component of the BRCA1-A complex, at least composed of BRCA1, BARD1, UIMC1/RAP80, ABRAXAS1, BRCC3/BRCC36, BABAM2 and BABAM1/NBA1. In the BRCA1-A complex, interacts directly with ABRAXAS1 and BABAM2. Component of the BRISC complex, at least composed of ABRAXAS2, BRCC3/BRCC36, BABAM2 and BABAM1/NBA1. Identified in a complex with SHMT2 and the other subunits of the BRISC complex. In the BRISC complex, interacts directly with ABRAXAS2. Identified in a complex with ABRAXAS2 and NUMA1. The BRISC complex interacts with the CSN complex. Component of the BRCA1/BRCA2 containing complex (BRCC), which also contains BRCA1, BRCA2, BARD1, BABAM2 and RAD51. BRCC is a ubiquitin E3 ligase complex that enhances cellular survival following DNA damage. Interacts with BRCA1. Binds polyubiquitin. Interacts with PWWP2B. Interacts with HDAC1; this interaction is enhanced in the presence of PWWP2B. Requires Zn(2+) as cofactor.

Its subcellular location is the nucleus. The protein resides in the cytoplasm. It is found in the cytoskeleton. The protein localises to the spindle pole. Metalloprotease that specifically cleaves 'Lys-63'-linked polyubiquitin chains. Does not have activity toward 'Lys-48'-linked polyubiquitin chains. Component of the BRCA1-A complex, a complex that specifically recognizes 'Lys-63'-linked ubiquitinated histones H2A and H2AX at DNA lesions sites, leading to target the BRCA1-BARD1 heterodimer to sites of DNA damage at double-strand breaks (DSBs). In the BRCA1-A complex, it specifically removes 'Lys-63'-linked ubiquitin on histones H2A and H2AX, antagonizing the RNF8-dependent ubiquitination at double-strand breaks (DSBs). Catalytic subunit of the BRISC complex, a multiprotein complex that specifically cleaves 'Lys-63'-linked ubiquitin in various substrates. Mediates the specific 'Lys-63'-specific deubiquitination associated with the COP9 signalosome complex (CSN), via the interaction of the BRISC complex with the CSN complex. The BRISC complex is required for normal mitotic spindle assembly and microtubule attachment to kinetochores via its role in deubiquitinating NUMA1. Plays a role in interferon signaling via its role in the deubiquitination of the interferon receptor IFNAR1; deubiquitination increases IFNAR1 activity by enhancing its stability and cell surface expression. Acts as a regulator of the NLRP3 inflammasome by mediating deubiquitination of NLRP3, leading to NLRP3 inflammasome assembly. Down-regulates the response to bacterial lipopolysaccharide (LPS) via its role in IFNAR1 deubiquitination. Deubiquitinates HDAC1 and PWWP2B leading to their stabilization. This is Lys-63-specific deubiquitinase BRCC36 (Brcc3) from Rattus norvegicus (Rat).